The following is a 427-amino-acid chain: Serine--tRNA ligase (427 aa).

Position 231–233 (231–233 (TAE)) interacts with L-serine. Position 262 to 264 (262 to 264 (RSE)) interacts with ATP. L-serine is bound at residue E285. Residue 349–352 (EISS) participates in ATP binding. S385 serves as a coordination point for L-serine.

The protein belongs to the class-II aminoacyl-tRNA synthetase family. Type-1 seryl-tRNA synthetase subfamily. In terms of assembly, homodimer. The tRNA molecule binds across the dimer.

It localises to the cytoplasm. The catalysed reaction is tRNA(Ser) + L-serine + ATP = L-seryl-tRNA(Ser) + AMP + diphosphate + H(+). It carries out the reaction tRNA(Sec) + L-serine + ATP = L-seryl-tRNA(Sec) + AMP + diphosphate + H(+). Its pathway is aminoacyl-tRNA biosynthesis; selenocysteinyl-tRNA(Sec) biosynthesis; L-seryl-tRNA(Sec) from L-serine and tRNA(Sec): step 1/1. Functionally, catalyzes the attachment of serine to tRNA(Ser). Is also able to aminoacylate tRNA(Sec) with serine, to form the misacylated tRNA L-seryl-tRNA(Sec), which will be further converted into selenocysteinyl-tRNA(Sec). This Listeria monocytogenes serotype 4b (strain CLIP80459) protein is Serine--tRNA ligase.